A 264-amino-acid polypeptide reads, in one-letter code: Thiazole synthase (264 aa).

Lysine 101 acts as the Schiff-base intermediate with DXP in catalysis. Residues glycine 162, 189 to 190 (AG), and 211 to 212 (NT) each bind 1-deoxy-D-xylulose 5-phosphate. The disordered stretch occupies residues 245-264 (KRQTASPSTPTLGQPFWHNQ).

Belongs to the ThiG family. As to quaternary structure, homotetramer. Forms heterodimers with either ThiH or ThiS.

The protein localises to the cytoplasm. It catalyses the reaction [ThiS sulfur-carrier protein]-C-terminal-Gly-aminoethanethioate + 2-iminoacetate + 1-deoxy-D-xylulose 5-phosphate = [ThiS sulfur-carrier protein]-C-terminal Gly-Gly + 2-[(2R,5Z)-2-carboxy-4-methylthiazol-5(2H)-ylidene]ethyl phosphate + 2 H2O + H(+). The protein operates within cofactor biosynthesis; thiamine diphosphate biosynthesis. Its function is as follows. Catalyzes the rearrangement of 1-deoxy-D-xylulose 5-phosphate (DXP) to produce the thiazole phosphate moiety of thiamine. Sulfur is provided by the thiocarboxylate moiety of the carrier protein ThiS. In vitro, sulfur can be provided by H(2)S. The sequence is that of Thiazole synthase from Cellvibrio japonicus (strain Ueda107) (Pseudomonas fluorescens subsp. cellulosa).